Here is a 96-residue protein sequence, read N- to C-terminus: Small ribosomal subunit protein bS6 (96 aa).

It belongs to the bacterial ribosomal protein bS6 family.

Functionally, binds together with bS18 to 16S ribosomal RNA. The sequence is that of Small ribosomal subunit protein bS6 from Natranaerobius thermophilus (strain ATCC BAA-1301 / DSM 18059 / JW/NM-WN-LF).